The chain runs to 895 residues: Splicing factor 3B subunit 2 (895 aa).

Basic and acidic residues predominate over residues 1–10 (MATEHPEPPK). Disordered regions lie at residues 1 to 24 (MATEHPEPPKAELQLPPPPPPGHY), 65 to 136 (LNRP…LRVG), 197 to 373 (AKMG…EYVT), and 400 to 453 (KKEK…SKKK). Residue lysine 10 forms a Glycyl lysine isopeptide (Lys-Gly) (interchain with G-Cter in SUMO2) linkage. Positions 24 to 58 (YGAWAAQELQAKLAEIGAPIQGNREELVERLQSYT) constitute an SAP domain. 2 stretches are compositionally biased toward pro residues: residues 90–114 (IPMPPPPLGLPPLQPPPPPPPPPPG) and 122–133 (AHPPNLGPPPPL). Residues 140–199 (ALSEEERLKLAQQQAALLMQQEERAKQQGDHSLKEHELLEQQKRAAVLLEQERQQEIAKM) are a coiled coil. Residues 218 to 238 (PLGPRVAAPVGPVGPTPTVLP) are compositionally biased toward low complexity. Omega-N-methylarginine occurs at positions 222, 245, and 247. The span at 241 to 254 (APVPRPRGPPPPPG) shows a compositional bias: pro residues. The residue at position 275 (lysine 275) is an N6-acetyllysine. A compositionally biased stretch (basic and acidic residues) spans 277-286 (LQLKESRQEE). A Glycyl lysine isopeptide (Lys-Gly) (interchain with G-Cter in SUMO2) cross-link involves residue lysine 280. The residue at position 289 (serine 289) is a Phosphoserine. The residue at position 298 (threonine 298) is a Phosphothreonine. 2 positions are modified to phosphoserine: serine 307 and serine 309. Threonine 311 is subject to Phosphothreonine. Residue serine 317 is modified to Phosphoserine. A compositionally biased stretch (basic residues) spans 322–338 (EKNRKRRNRKKKKKPQR). Basic and acidic residues predominate over residues 347 to 359 (SGDREKDSTRSRG). A phosphoserine mark is found at serine 360 and serine 362. Glycyl lysine isopeptide (Lys-Gly) (interchain with G-Cter in SUMO2) cross-links involve residues lysine 400 and lysine 412. Composition is skewed to basic and acidic residues over residues 400 to 414 (KKEKEKEPEKLDKLE) and 422 to 431 (KGFEEEHKDS). Residues 401–550 (KEKEKEPEKL…QEKEEQKTMK (150 aa)) form a required for interaction with PRMT9 region. Serine 431, serine 435, and serine 436 each carry phosphoserine. Residue lysine 492 forms a Glycyl lysine isopeptide (Lys-Gly) (interchain with G-Cter in SUMO2) linkage. The residue at position 508 (arginine 508) is an Omega-N-methylarginine; by PRMT9; alternate. Symmetric dimethylarginine; by PRMT9; alternate is present on arginine 508. Omega-N-methylarginine is present on arginine 515. Lysine 543 is covalently cross-linked (Glycyl lysine isopeptide (Lys-Gly) (interchain with G-Cter in SUMO2)). A disordered region spans residues 691 to 757 (AAEFQTKTEE…PGGFSSVPAG (67 aa)). Residues 712-732 (EPSDEESSEEEEEEESDEDKP) show a composition bias toward acidic residues. Residue lysine 770 forms a Glycyl lysine isopeptide (Lys-Gly) (interchain with G-Cter in SUMO2) linkage. Threonine 780 bears the Phosphothreonine mark. Residues lysine 790, lysine 843, and lysine 857 each participate in a glycyl lysine isopeptide (Lys-Gly) (interchain with G-Cter in SUMO2) cross-link. The segment covering 844–869 (YEEHVREQQAQVEKEDFSDMVAEHAA) has biased composition (basic and acidic residues). The disordered stretch occupies residues 844–895 (YEEHVREQQAQVEKEDFSDMVAEHAAKQKQKKRKAQPQDSRGGSKKYKEFKF). At serine 861 the chain carries Phosphoserine.

Component of the 17S U2 SnRNP complex, a ribonucleoprotein complex that contains small nuclear RNA (snRNA) U2 and a number of specific proteins. Part of the SF3B subcomplex of the 17S U2 SnRNP complex. SF3B associates with the splicing subcomplex SF3A and a 12S RNA unit to form the U2 small nuclear ribonucleoproteins complex (U2 snRNP). Within the SF3B complex, interacts directly with SF3B4. Found in a complex with PRMT9, SF3B2 and SF3B4. Interacts (Arg-508-methylated form) with SMN1 (via Tudor domain). Interacts with RBM7. Interacts with ERCC6. Component of the minor spliceosome. Within this complex, interacts with SCNM1 and CRIPT. In terms of assembly, (Microbial infection) Interacts with HIV-1 Vpr. In terms of processing, methylation at Arg-508 by PRMT9 is required for the interaction with SMN1.

The protein localises to the nucleus. Its subcellular location is the nucleus speckle. Its function is as follows. Component of the 17S U2 SnRNP complex of the spliceosome, a large ribonucleoprotein complex that removes introns from transcribed pre-mRNAs. The 17S U2 SnRNP complex (1) directly participates in early spliceosome assembly and (2) mediates recognition of the intron branch site during pre-mRNA splicing by promoting the selection of the pre-mRNA branch-site adenosine, the nucleophile for the first step of splicing. Within the 17S U2 SnRNP complex, SF3B2 is part of the SF3B subcomplex, which is required for 'A' complex assembly formed by the stable binding of U2 snRNP to the branchpoint sequence in pre-mRNA. Sequence independent binding of SF3A and SF3B subcomplexes upstream of the branch site is essential, it may anchor U2 snRNP to the pre-mRNA. May also be involved in the assembly of the 'E' complex. Also acts as a component of the minor spliceosome, which is involved in the splicing of U12-type introns in pre-mRNAs. The polypeptide is Splicing factor 3B subunit 2 (SF3B2) (Homo sapiens (Human)).